The sequence spans 181 residues: Protein Syd (181 aa).

This sequence belongs to the Syd family.

It localises to the cell inner membrane. Functionally, interacts with the SecY protein in vivo. May bind preferentially to an uncomplexed state of SecY, thus functioning either as a chelating agent for excess SecY in the cell or as a regulatory factor that negatively controls the translocase function. The chain is Protein Syd from Salmonella arizonae (strain ATCC BAA-731 / CDC346-86 / RSK2980).